The primary structure comprises 513 residues: ATP synthase subunit alpha (513 aa).

Position 169–176 (Gly169–Thr176) interacts with ATP.

It belongs to the ATPase alpha/beta chains family. As to quaternary structure, F-type ATPases have 2 components, CF(1) - the catalytic core - and CF(0) - the membrane proton channel. CF(1) has five subunits: alpha(3), beta(3), gamma(1), delta(1), epsilon(1). CF(0) has three main subunits: a(1), b(2) and c(9-12). The alpha and beta chains form an alternating ring which encloses part of the gamma chain. CF(1) is attached to CF(0) by a central stalk formed by the gamma and epsilon chains, while a peripheral stalk is formed by the delta and b chains.

Its subcellular location is the cell inner membrane. It catalyses the reaction ATP + H2O + 4 H(+)(in) = ADP + phosphate + 5 H(+)(out). Functionally, produces ATP from ADP in the presence of a proton gradient across the membrane. The alpha chain is a regulatory subunit. This is ATP synthase subunit alpha from Actinobacillus pleuropneumoniae serotype 7 (strain AP76).